Reading from the N-terminus, the 206-residue chain is Small ribosomal subunit protein uS4 (206 aa).

An S4 RNA-binding domain is found at 96–156 (QRLDNVVYRM…EKAKKQARIV (61 aa)).

The protein belongs to the universal ribosomal protein uS4 family. As to quaternary structure, part of the 30S ribosomal subunit. Contacts protein S5. The interaction surface between S4 and S5 is involved in control of translational fidelity.

Its function is as follows. One of the primary rRNA binding proteins, it binds directly to 16S rRNA where it nucleates assembly of the body of the 30S subunit. In terms of biological role, with S5 and S12 plays an important role in translational accuracy. This is Small ribosomal subunit protein uS4 from Alteromonas mediterranea (strain DSM 17117 / CIP 110805 / LMG 28347 / Deep ecotype).